Here is a 302-residue protein sequence, read N- to C-terminus: Protein FdhE homolog (302 aa).

It belongs to the FdhE family.

The protein localises to the cytoplasm. Functionally, necessary for formate dehydrogenase activity. In Haemophilus influenzae (strain PittGG), this protein is Protein FdhE homolog.